Reading from the N-terminus, the 89-residue chain is Tuberculin-active protein (89 aa).

C27 and C59 are disulfide-bonded. The interval 61 to 89 (DGGSESEGKNGSQMRLIADVGPESATVAK) is disordered.

In terms of biological role, tuberculin is the soluble, proteinaceous cell substance of the bacterium, to which infected animals become hypersensitive and react characteristically to dermal injections. The protein is Tuberculin-active protein of Mycobacterium tuberculosis.